Here is a 150-residue protein sequence, read N- to C-terminus: Protein ADM2 (150 aa).

The first 25 residues, Met-1–Ser-25, serve as a signal peptide directing secretion. A propeptide spanning residues Gly-26 to Ser-100 is cleaved from the precursor. The interval Leu-28–Arg-102 is disordered. Cysteines 112 and 117 form a disulfide. Tyr-149 is subject to Tyrosine amide.

It belongs to the adrenomedullin family. As to expression, high expression detected in the submaxillary gland, kidney, stomach, and mesentery, followed by the pituitary, lung, pancreas, intestines, spleen, thymus and ovary. Expressed mainly in the intermediate lobe of the pituitary, with sporadic in the anterior lobe.

It localises to the secreted. In terms of biological role, intermedin/ADM2 is a peptide hormone that plays a role as physiological regulator of gastrointestinal and cardiovascular bioactivities mediated by the CALCRL-RAMPs receptor complexes. Activates the cAMP-dependent pathway through interaction with CALCRL-RAMP3 receptor complex. The protein is Protein ADM2 of Mus musculus (Mouse).